A 475-amino-acid chain; its full sequence is Sulfate adenylyltransferase subunit 1 (475 aa).

A tr-type G domain is found at 25–239; it reads KSLLRFLTCG…EVLETVEIQR (215 aa). The G1 stretch occupies residues 34–41; that stretch reads GSVDDGKS. Position 34–41 (34–41) interacts with GTP; that stretch reads GSVDDGKS. The segment at 92–96 is G2; it reads GITID. A G3 region spans residues 113 to 116; that stretch reads DTPG. Residues 113–117 and 168–171 each bind GTP; these read DTPGH and NKMD. A G4 region spans residues 168–171; the sequence is NKMD. Residues 206-208 form a G5 region; the sequence is SAL.

This sequence belongs to the TRAFAC class translation factor GTPase superfamily. Classic translation factor GTPase family. CysN/NodQ subfamily. As to quaternary structure, heterodimer composed of CysD, the smaller subunit, and CysN.

The catalysed reaction is sulfate + ATP + H(+) = adenosine 5'-phosphosulfate + diphosphate. Its pathway is sulfur metabolism; hydrogen sulfide biosynthesis; sulfite from sulfate: step 1/3. Functionally, with CysD forms the ATP sulfurylase (ATPS) that catalyzes the adenylation of sulfate producing adenosine 5'-phosphosulfate (APS) and diphosphate, the first enzymatic step in sulfur assimilation pathway. APS synthesis involves the formation of a high-energy phosphoric-sulfuric acid anhydride bond driven by GTP hydrolysis by CysN coupled to ATP hydrolysis by CysD. This chain is Sulfate adenylyltransferase subunit 1, found in Escherichia coli O17:K52:H18 (strain UMN026 / ExPEC).